The following is a 93-amino-acid chain: Small ribosomal subunit protein uS17 (93 aa).

It belongs to the universal ribosomal protein uS17 family. Part of the 30S ribosomal subunit.

In terms of biological role, one of the primary rRNA binding proteins, it binds specifically to the 5'-end of 16S ribosomal RNA. This chain is Small ribosomal subunit protein uS17, found in Rhodococcus jostii (strain RHA1).